Consider the following 342-residue polypeptide: Aspartate carbamoyltransferase catalytic subunit (342 aa).

Positions 59 and 60 each coordinate carbamoyl phosphate. Lys-87 is a binding site for L-aspartate. Carbamoyl phosphate is bound by residues Arg-109, His-142, and Gln-145. L-aspartate is bound by residues Arg-182 and Arg-253. Gly-294 and Pro-295 together coordinate carbamoyl phosphate.

The protein belongs to the aspartate/ornithine carbamoyltransferase superfamily. ATCase family. As to quaternary structure, heterododecamer (2C3:3R2) of six catalytic PyrB chains organized as two trimers (C3), and six regulatory PyrI chains organized as three dimers (R2).

It catalyses the reaction carbamoyl phosphate + L-aspartate = N-carbamoyl-L-aspartate + phosphate + H(+). The protein operates within pyrimidine metabolism; UMP biosynthesis via de novo pathway; (S)-dihydroorotate from bicarbonate: step 2/3. Its function is as follows. Catalyzes the condensation of carbamoyl phosphate and aspartate to form carbamoyl aspartate and inorganic phosphate, the committed step in the de novo pyrimidine nucleotide biosynthesis pathway. This chain is Aspartate carbamoyltransferase catalytic subunit, found in Synechococcus sp. (strain WH7803).